A 656-amino-acid chain; its full sequence is Phosphoprotein 85 (656 aa).

Disordered regions lie at residues 1-174 (MSSR…EGDE) and 615-656 (NGNH…EYCC). Residues 46–55 (SATEDLDRME) show a composition bias toward basic and acidic residues. 2 stretches are compositionally biased toward low complexity: residues 59–70 (SPYSVSSDAPSS) and 140–160 (DNSS…RSTS). The span at 625 to 634 (SPPPPLPPRD) shows a compositional bias: pro residues. Basic and acidic residues predominate over residues 635–656 (YPQRDERDRHRRDRRDSGEYCC).

This sequence belongs to the herpesviridae pp85 family. Phosphorylated.

It is found in the virion tegument. The protein localises to the host cytoplasm. In Homo sapiens (Human), this protein is Phosphoprotein 85 (UL25).